We begin with the raw amino-acid sequence, 263 residues long: Lens fiber major intrinsic protein (263 aa).

The Cytoplasmic segment spans residues 1–9 (MWELRSASF). A helical transmembrane segment spans residues 10-29 (WRAIFAEFFATLFYVFFGLG). Topologically, residues 30–41 (ASLRWAPGPLHV) are extracellular. Residues 42–59 (LQVALAFGLALATLVQTV) form a helical membrane-spanning segment. Residues 60-61 (GH) are Cytoplasmic-facing. An intramembrane region (discontinuously helical) is located at residues 62–77 (ISGAHVNPAVTFAFLV). An NPA 1 motif is present at residues 68–70 (NPA). At 78–82 (GSQMS) the chain is on the cytoplasmic side. The chain crosses the membrane as a helical span at residues 83–106 (LLRAFCYIAAQLLGAVAGAAVLYS). The Extracellular segment spans residues 107–127 (VTPPAVRGNLALNTLHAGVSV). A helical membrane pass occupies residues 128-148 (GQATTVEIFLTLQFVLCIFAT). The Cytoplasmic segment spans residues 149-156 (YDERRNGR). A helical transmembrane segment spans residues 157 to 175 (MGSVALAVGFSLTLGHLFG). Residues 176–178 (MYY) lie on the Extracellular side of the membrane. The segment at residues 179–193 (TGAGMNPARSFAPAI) is an intramembrane region (discontinuously helical). The NPA 2 signature appears at 184–186 (NPA). Topologically, residues 194–200 (LTRNFSN) are extracellular. Residues 201 to 222 (HWVYWVGPIIGGGLGSLLYDFL) form a helical membrane-spanning segment. Over 223 to 263 (LFPRLKSVSERLSILKGARPSDSNGQPEGTGEPVELKTQAL) the chain is Cytoplasmic. The segment at 227–237 (LKSVSERLSIL) is interaction with CALM. S235, S243, and S245 each carry phosphoserine. Residues 240–263 (ARPSDSNGQPEGTGEPVELKTQAL) form a disordered region. The residue at position 246 (N246) is a Deamidated asparagine.

It belongs to the MIP/aquaporin (TC 1.A.8) family. In terms of assembly, homotetramer; each monomer provides an independent water pore. Two homotetramers on opposing membranes can dimerize, forming a cell-cell junction. Interacts with CALM; the calcium-calmodulin/CALM complex interacts with the cytoplasmic domains of two aquaporins, leading to channel closure. Interacts with BFSP1 (via C-terminus); prevents calcium-dependent inhibition of the water channel activity. In terms of processing, subject to partial proteolytic cleavage in the eye lens core. Partial proteolysis promotes interactions between tetramers from adjoining membranes. Fatty acylated at Met-1 and Lys-238. The acyl modifications, in decreasing order of ion abundance, are: oleoyl (C18:1) &gt; palmitoyl (C16:0) &gt; stearoyl (C18:0) &gt; eicosenoyl (C20:1) &gt; dihomo-gamma-linolenoyl (C20:3) &gt; palmitoleoyl (C16:1) &gt; eicosadienoyl (C20:2).

It localises to the cell membrane. The protein resides in the cell junction. The catalysed reaction is H2O(in) = H2O(out). Its activity is regulated as follows. The water channel activity is inhibited by calcium through calmodulin/CALM. Functionally, aquaporins form homotetrameric transmembrane channels, with each monomer independently mediating water transport across the plasma membrane along its osmotic gradient. Specifically expressed in lens fiber cells, this aquaporin is crucial for maintaining lens water homeostasis and transparency. Beyond water permeability, it also acts as a cell-to-cell adhesion molecule, forming thin junctions between lens fiber cells that are essential for maintaining the ordered structure and transparency of the lens. This chain is Lens fiber major intrinsic protein, found in Mus musculus (Mouse).